Reading from the N-terminus, the 184-residue chain is Elongation factor P (184 aa).

The protein belongs to the elongation factor P family.

It localises to the cytoplasm. It participates in protein biosynthesis; polypeptide chain elongation. Involved in peptide bond synthesis. Stimulates efficient translation and peptide-bond synthesis on native or reconstituted 70S ribosomes in vitro. Probably functions indirectly by altering the affinity of the ribosome for aminoacyl-tRNA, thus increasing their reactivity as acceptors for peptidyl transferase. In Verminephrobacter eiseniae (strain EF01-2), this protein is Elongation factor P.